Here is a 299-residue protein sequence, read N- to C-terminus: Oxygen-dependent coproporphyrinogen-III oxidase (299 aa).

Ser-92 contacts substrate. Mn(2+) is bound by residues His-96 and His-106. His-106 acts as the Proton donor in catalysis. 108-110 (NVR) serves as a coordination point for substrate. The Mn(2+) site is built by His-145 and His-175. The important for dimerization stretch occupies residues 240–275 (YVEFNLVWDRGTLFGLQTGGRTESILMSMPPLVRWE). Residue 258–260 (GGR) coordinates substrate.

This sequence belongs to the aerobic coproporphyrinogen-III oxidase family. As to quaternary structure, homodimer. Mn(2+) serves as cofactor.

The protein resides in the cytoplasm. It carries out the reaction coproporphyrinogen III + O2 + 2 H(+) = protoporphyrinogen IX + 2 CO2 + 2 H2O. The protein operates within porphyrin-containing compound metabolism; protoporphyrin-IX biosynthesis; protoporphyrinogen-IX from coproporphyrinogen-III (O2 route): step 1/1. Involved in the heme biosynthesis. Catalyzes the aerobic oxidative decarboxylation of propionate groups of rings A and B of coproporphyrinogen-III to yield the vinyl groups in protoporphyrinogen-IX. The protein is Oxygen-dependent coproporphyrinogen-III oxidase of Escherichia coli O7:K1 (strain IAI39 / ExPEC).